A 154-amino-acid chain; its full sequence is Interleukin-7 (154 aa).

An N-terminal signal peptide occupies residues 1-25 (MFHVSFRYIFGIPPLILVLLPVTSS). 3 disulfide bridges follow: cysteine 27–cysteine 145, cysteine 58–cysteine 133, and cysteine 71–cysteine 116. N-linked (GlcNAc...) asparagine glycosylation is found at asparagine 94 and asparagine 115.

This sequence belongs to the IL-7/IL-9 family. Interacts with IL7R and CSF2RG. In terms of processing, three disulfide bonds are present.

It is found in the secreted. Its function is as follows. Hematopoietic cytokine that plays an essential role in the development, expansion, and survival of naive and memory T-cells and B-cells thereby regulating the number of mature lymphocytes and maintaining lymphoid homeostasis. Mechanistically, exerts its biological effects through a receptor composed of IL7RA subunit and the cytokine receptor common subunit gamma/CSF2RG. Binding to the receptor leads to activation of various kinases including JAK1 or JAK3 depending on the cell type and subsequently propagation of signals through activation of several downstream signaling pathways including the PI3K/Akt/mTOR or the JAK-STAT5. This chain is Interleukin-7 (Il7), found in Mus musculus (Mouse).